A 137-amino-acid chain; its full sequence is Leaf-specific thionin (137 aa).

The signal sequence occupies residues 1–28; the sequence is MATNKSIKSVVICVLILGLVLEQVQVEA. 4 disulfide bridges follow: C31–C68, C32–C60, C40–C58, and C44–C54. A propeptide spans 75–137 (acidic domain); that stretch reads LNLLPESGEP…DGEVIQSVEA (63 aa).

Belongs to the plant thionin (TC 1.C.44) family. 4 C-C subfamily.

The protein localises to the secreted. Functionally, thionins are small plant proteins which are toxic to animal cells. They seem to exert their toxic effect at the level of the cell membrane. Their precise function is not known. The protein is Leaf-specific thionin (THI1.5) of Hordeum vulgare (Barley).